The following is a 705-amino-acid chain: Tetratricopeptide repeat protein 12 (705 aa).

Thr71 is subject to Phosphothreonine. 3 TPR repeats span residues 106–139, 140–173, and 174–207; these read ADAL…LKDM, KVLY…DEKC, and TKAY…NPKL.

As to expression, expressed in testis and in epithelial cells of trachea and bronchial tube.

The protein resides in the cytoplasm. Its function is as follows. Cytoplasmic protein that plays a role in the proper assembly of dynein arm complexes in motile cilia in both respiratory cells and sperm flagella. The polypeptide is Tetratricopeptide repeat protein 12 (TTC12) (Homo sapiens (Human)).